Here is a 196-residue protein sequence, read N- to C-terminus: Small ribosomal subunit protein uS4c (196 aa).

In terms of domain architecture, S4 RNA-binding spans M89–Q149.

The protein belongs to the universal ribosomal protein uS4 family. Part of the 30S ribosomal subunit. Contacts protein S5. The interaction surface between S4 and S5 is involved in control of translational fidelity.

It is found in the plastid. The protein localises to the chloroplast. One of the primary rRNA binding proteins, it binds directly to 16S rRNA where it nucleates assembly of the body of the 30S subunit. Functionally, with S5 and S12 plays an important role in translational accuracy. The chain is Small ribosomal subunit protein uS4c (rps4) from Asparagus maritimus (Sea asparagus).